The following is a 442-amino-acid chain: MSSRDFSNDLFSINIEENAGCVVSAKVQANPLVTQKCHKEALKTVKKNVVLPGFRKGKAPDNIVESRYSTQVEQELRRLFLRASFEALSQMCDRKPLSPKAVRSSAIDTCNPVNGGSVSFLYEAFPVIPSLPWEQLSLPDPEPVKEISEEDLENGLKNVAYFFATKTPVTRPSQEGDFISLSLYVSKRGDENSTPVAIFENKYFKISEEDMTDSFKARFLNVSTGHRVEEEIGSEDIQSFLNGDLLTFTVNAVIEISSPEMDDEKARELQAESLEDLKKKLRIQLENQAKEAQHQKRFSDAEDALAQLIDFDLPESLLREREELLSREKLLNARLVKYCSDSELEEQKQALLEEAKADARKAVKLLFLTQKVFSEKGLSISREELQYMMDVCSRERFGGYPPKDISNEMIQELVLVARDRLTYRKAIEAISSEKKDLEVVPS.

The PPIase FKBP-type domain maps to 176–259; sequence GDFISLSLYV…VNAVIEISSP (84 aa).

The protein belongs to the FKBP-type PPIase family. Tig subfamily.

The protein resides in the cytoplasm. The enzyme catalyses [protein]-peptidylproline (omega=180) = [protein]-peptidylproline (omega=0). Functionally, involved in protein export. Acts as a chaperone by maintaining the newly synthesized protein in an open conformation. Functions as a peptidyl-prolyl cis-trans isomerase. The protein is Trigger factor of Chlamydia trachomatis serovar L2 (strain ATCC VR-902B / DSM 19102 / 434/Bu).